The following is a 244-amino-acid chain: uncharacterized protein (244 aa).

6 consecutive transmembrane segments (helical) span residues 22 to 42 (IMLQ…LLSF), 63 to 83 (FIFS…WGLT), 110 to 130 (VILL…EAFA), 140 to 160 (IMSL…NLTV), 186 to 206 (GVLF…IFQL), and 213 to 233 (AVFD…MLVV).

The protein localises to the cell membrane. This is an uncharacterized protein from Haemophilus influenzae (strain ATCC 51907 / DSM 11121 / KW20 / Rd).